The following is a 115-amino-acid chain: Transmembrane protein 218 (115 aa).

3 helical membrane-spanning segments follow: residues 5–25 (VLGV…VLLL), 38–58 (FSVI…LLFP), and 81–101 (YVLL…VLIH).

This sequence belongs to the TMEM218 family. In terms of assembly, interacts with TMEM67.

It is found in the membrane. It localises to the cell projection. Its subcellular location is the cilium. Its function is as follows. May be involved in ciliary biogenesis or function. In Homo sapiens (Human), this protein is Transmembrane protein 218 (TMEM218).